Consider the following 351-residue polypeptide: Phosphoribosylformylglycinamidine cyclo-ligase (351 aa).

The protein belongs to the AIR synthase family.

It is found in the cytoplasm. The catalysed reaction is 2-formamido-N(1)-(5-O-phospho-beta-D-ribosyl)acetamidine + ATP = 5-amino-1-(5-phospho-beta-D-ribosyl)imidazole + ADP + phosphate + H(+). Its pathway is purine metabolism; IMP biosynthesis via de novo pathway; 5-amino-1-(5-phospho-D-ribosyl)imidazole from N(2)-formyl-N(1)-(5-phospho-D-ribosyl)glycinamide: step 2/2. This is Phosphoribosylformylglycinamidine cyclo-ligase from Burkholderia mallei (strain NCTC 10247).